A 648-amino-acid polypeptide reads, in one-letter code: Macrolide export ATP-binding/permease protein MacB (648 aa).

The 239-residue stretch at 5–243 (LELKDIRRSY…AGGTEPVVNT (239 aa)) folds into the ABC transporter domain. Position 41-48 (41-48 (GASGSGKS)) interacts with ATP. The next 4 helical transmembrane spans lie at 273–293 (LLTMLGIIIGIASVVSIVVVG), 523–543 (LFLTLVAVISLVVGGIGVMNI), 576–596 (AVLVCLVGGALGITLSLLIAF), and 600–620 (LFLPGWEIGFSPLALLLAFLC).

This sequence belongs to the ABC transporter superfamily. Macrolide exporter (TC 3.A.1.122) family. Homodimer. Part of the tripartite efflux system MacAB-TolC, which is composed of an inner membrane transporter, MacB, a periplasmic membrane fusion protein, MacA, and an outer membrane component, TolC. The complex forms a large protein conduit and can translocate molecules across both the inner and outer membranes. Interacts with MacA.

It is found in the cell inner membrane. Its function is as follows. Part of the tripartite efflux system MacAB-TolC. MacB is a non-canonical ABC transporter that contains transmembrane domains (TMD), which form a pore in the inner membrane, and an ATP-binding domain (NBD), which is responsible for energy generation. Confers resistance against macrolides. The chain is Macrolide export ATP-binding/permease protein MacB from Shigella sonnei (strain Ss046).